The chain runs to 457 residues: NADH-quinone oxidoreductase subunit N (457 aa).

Helical transmembrane passes span 2 to 22 (NAII…FIGL), 25 to 45 (LIYP…ACTF), 60 to 80 (NYSV…FILF), 92 to 112 (GDHY…VSFS), 114 to 134 (MSML…LAGS), 149 to 169 (FILG…IYGA), 188 to 208 (FFIG…AVPF), 222 to 242 (FITA…FYLM), 253 to 273 (YLSH…NIAA), 283 to 303 (LAFS…ILTI), 310 to 330 (FVYL…VQVV), 353 to 373 (AFVL…AGFF), 382 to 402 (VIHA…LISV), and 431 to 451 (VILA…DILL).

This sequence belongs to the complex I subunit 2 family. In terms of assembly, NDH-1 is composed of 14 different subunits. Subunits NuoA, H, J, K, L, M, N constitute the membrane sector of the complex.

Its subcellular location is the cell inner membrane. The enzyme catalyses a quinone + NADH + 5 H(+)(in) = a quinol + NAD(+) + 4 H(+)(out). NDH-1 shuttles electrons from NADH, via FMN and iron-sulfur (Fe-S) centers, to quinones in the respiratory chain. The immediate electron acceptor for the enzyme in this species is believed to be a menaquinone. Couples the redox reaction to proton translocation (for every two electrons transferred, four hydrogen ions are translocated across the cytoplasmic membrane), and thus conserves the redox energy in a proton gradient. This is NADH-quinone oxidoreductase subunit N from Cytophaga hutchinsonii (strain ATCC 33406 / DSM 1761 / CIP 103989 / NBRC 15051 / NCIMB 9469 / D465).